Consider the following 380-residue polypeptide: Queuine tRNA-ribosyltransferase (380 aa).

Asp-95 acts as the Proton acceptor in catalysis. Residues 95-99 (DSGGF), Asp-149, Gln-192, and Gly-219 each bind substrate. Positions 250–256 (GVGSPDA) are RNA binding. The active-site Nucleophile is the Asp-269. Residues 274-278 (TRIAR) are RNA binding; important for wobble base 34 recognition. Zn(2+) contacts are provided by Cys-307, Cys-309, Cys-312, and His-338.

Belongs to the queuine tRNA-ribosyltransferase family. Homodimer. Within each dimer, one monomer is responsible for RNA recognition and catalysis, while the other monomer binds to the replacement base PreQ1. It depends on Zn(2+) as a cofactor.

It carries out the reaction 7-aminomethyl-7-carbaguanine + guanosine(34) in tRNA = 7-aminomethyl-7-carbaguanosine(34) in tRNA + guanine. It participates in tRNA modification; tRNA-queuosine biosynthesis. Its function is as follows. Catalyzes the base-exchange of a guanine (G) residue with the queuine precursor 7-aminomethyl-7-deazaguanine (PreQ1) at position 34 (anticodon wobble position) in tRNAs with GU(N) anticodons (tRNA-Asp, -Asn, -His and -Tyr). Catalysis occurs through a double-displacement mechanism. The nucleophile active site attacks the C1' of nucleotide 34 to detach the guanine base from the RNA, forming a covalent enzyme-RNA intermediate. The proton acceptor active site deprotonates the incoming PreQ1, allowing a nucleophilic attack on the C1' of the ribose to form the product. After dissociation, two additional enzymatic reactions on the tRNA convert PreQ1 to queuine (Q), resulting in the hypermodified nucleoside queuosine (7-(((4,5-cis-dihydroxy-2-cyclopenten-1-yl)amino)methyl)-7-deazaguanosine). In Latilactobacillus sakei subsp. sakei (strain 23K) (Lactobacillus sakei subsp. sakei), this protein is Queuine tRNA-ribosyltransferase.